The following is a 72-amino-acid chain: Cytochrome b-c1 complex subunit 8 (72 aa).

Topologically, residues 2-41 are mitochondrial matrix; the sequence is GKQPVKLKAVVYAISPFQQKIMPGLWKDLPGKIHHKVSEN. A helical membrane pass occupies residues 42–59; that stretch reads WISATLLLGPLVGTYSYV. Residues 60-72 are Mitochondrial intermembrane-facing; the sequence is QHFLEKEKLEHRY.

Belongs to the UQCRQ/QCR8 family. In terms of assembly, component of the ubiquinol-cytochrome c oxidoreductase (cytochrome b-c1 complex, complex III, CIII), a multisubunit enzyme composed of 3 respiratory subunits cytochrome b, cytochrome c1 and Rieske protein, 2 core protein subunits, and additional low-molecular weight protein subunits. The complex exists as an obligatory dimer and forms supercomplexes (SCs) in the inner mitochondrial membrane with cytochrome c oxidase (complex IV, CIV).

It is found in the mitochondrion inner membrane. Its function is as follows. Component of the ubiquinol-cytochrome c oxidoreductase, a multisubunit transmembrane complex that is part of the mitochondrial electron transport chain which drives oxidative phosphorylation. The respiratory chain contains 3 multisubunit complexes succinate dehydrogenase (complex II, CII), ubiquinol-cytochrome c oxidoreductase (cytochrome b-c1 complex, complex III, CIII) and cytochrome c oxidase (complex IV, CIV), that cooperate to transfer electrons derived from NADH and succinate to molecular oxygen, creating an electrochemical gradient over the inner membrane that drives transmembrane transport and the ATP synthase. The cytochrome b-c1 complex catalyzes electron transfer from ubiquinol to cytochrome c, linking this redox reaction to translocation of protons across the mitochondrial inner membrane, with protons being carried across the membrane as hydrogens on the quinol. In the process called Q cycle, 2 protons are consumed from the matrix, 4 protons are released into the intermembrane space and 2 electrons are passed to cytochrome c. The sequence is that of Cytochrome b-c1 complex subunit 8 from Solanum tuberosum (Potato).